Consider the following 54-residue polypeptide: Large ribosomal subunit protein bL33 (54 aa).

The protein belongs to the bacterial ribosomal protein bL33 family.

This chain is Large ribosomal subunit protein bL33, found in Buchnera aphidicola subsp. Cinara cedri (strain Cc).